We begin with the raw amino-acid sequence, 1274 residues long: Myosin-binding protein C, cardiac-type (1274 aa).

An N-acetylmethionine modification is found at M1. An Ig-like C2-type 1 domain is found at 8–95 (PVSAFTKKPR…SKVKFDLKVT (88 aa)). S47 bears the Phosphoserine mark. The segment covering 95–104 (TEPAPPEKAE) has biased composition (basic and acidic residues). The disordered stretch occupies residues 95-153 (TEPAPPEKAESAVAPTSMEAPETPKEVPALATQLEGNVSSPEGSVSVTQDGSVAGSQGA). Phosphothreonine is present on T117. Residues 128 to 149 (LEGNVSSPEGSVSVTQDGSVAG) show a composition bias toward polar residues. An Ig-like C2-type 2 domain is found at 157–259 (PIGLFLMRPQ…KFDSCNFNLT (103 aa)). Zn(2+) contacts are provided by Q212, H214, E227, and H229. Residue S279 is modified to Phosphoserine. Phosphothreonine; by PKA and PKC is present on T287. S288 is subject to Phosphoserine. Position 307 is a phosphoserine; by PKA (S307). 2 positions are modified to phosphoserine: S312 and S427. 2 Ig-like C2-type domains span residues 361–452 (KKST…VKEP) and 452–546 (PPVL…KKLE). C436 and C443 are oxidised to a cystine. S459 and S550 each carry phosphoserine. Phosphothreonine is present on T607. The Ig-like C2-type 5 domain occupies 645–765 (PKIHLDCPGS…PVGEDQVNLT (121 aa)). Fibronectin type-III domains lie at 774 to 870 (APAA…IGPP) and 872 to 967 (EPTH…VQEI). Residues 971–1059 (PRLQLPRHLR…ENMEDKATLV (89 aa)) form the Ig-like C2-type 6 domain. A Fibronectin type-III 3 domain is found at 1068–1163 (PPLDIRVVET…TKEPIFIPRP (96 aa)). In terms of domain architecture, Ig-like C2-type 7 spans 1181 to 1269 (PSFTQPLTNR…GEAQCECRLE (89 aa)). R1241 carries the post-translational modification Omega-N-methylarginine.

Belongs to the immunoglobulin superfamily. MyBP family. Substrate for phosphorylation by PKA and PKC. Reversible phosphorylation appears to modulate contraction. In terms of processing, polyubiquitinated.

Thick filament-associated protein located in the crossbridge region of vertebrate striated muscle a bands. In vitro it binds MHC, F-actin and native thin filaments, and modifies the activity of actin-activated myosin ATPase. It may modulate muscle contraction or may play a more structural role. The protein is Myosin-binding protein C, cardiac-type (Mybpc3) of Rattus norvegicus (Rat).